The chain runs to 120 residues: UPF0231 protein YacL (120 aa).

It belongs to the UPF0231 family.

The protein is UPF0231 protein YacL of Escherichia coli O139:H28 (strain E24377A / ETEC).